A 455-amino-acid polypeptide reads, in one-letter code: GTPase Der (455 aa).

EngA-type G domains follow at residues 4–169 (PIVA…PKDQ) and 178–355 (LRVS…GQHQ). GTP-binding positions include 10–17 (GRPNVGKS), 57–61 (DTGGL), 120–123 (NKLE), 184–191 (GRPNVGKS), 233–237 (DTAGI), and 298–301 (NKWD). The KH-like domain maps to 356-441 (RRVSTSVLNE…PVRFIFRGKP (86 aa)).

The protein belongs to the TRAFAC class TrmE-Era-EngA-EngB-Septin-like GTPase superfamily. EngA (Der) GTPase family. In terms of assembly, associates with the 50S ribosomal subunit.

Functionally, GTPase that plays an essential role in the late steps of ribosome biogenesis. The protein is GTPase Der of Gloeobacter violaceus (strain ATCC 29082 / PCC 7421).